Consider the following 342-residue polypeptide: uncharacterized protein (342 aa).

The Nudix hydrolase domain maps to 155–309 (TYGIHINGYV…KPNCALVMVD (155 aa)).

This is an uncharacterized protein from Saccharomyces cerevisiae (strain ATCC 204508 / S288c) (Baker's yeast).